Here is a 178-residue protein sequence, read N- to C-terminus: Extracellular fatty acid-binding protein (178 aa).

A signal peptide spans 1-20 (MRTLALSLALALLCLLHTEA). Residue Ala21 is modified to Blocked amino end (Ala). Thr43 serves as a coordination point for enterobactin. 1-tetradecanoyl-sn-glycerol 3-phosphate contacts are provided by Tyr72 and Lys104. Cys80 and Cys173 are oxidised to a cystine. Enterobactin contacts are provided by Lys104, Arg123, and Arg134. 134 to 136 (RLY) is a 1-tetradecanoyl-sn-glycerol 3-phosphate binding site.

This sequence belongs to the calycin superfamily. Lipocalin family. In terms of assembly, monomer. In terms of processing, does not seem to be glycosylated. As to expression, expressed in egg white (at protein level). Expressed in the magnum of the oviduct (at protein level). Preferentially synthesized in nonproliferating cells.

It localises to the secreted. Its function is as follows. Siderocalin-like lipocalin tightly binding a variety of bacterial ferric siderophores, also binds long-chain unsaturated fatty acids such as linoleic acid, oleic acid, arachidonic acid and, with a lower affinity, long chain saturated fatty acids such as steraic acid. May act as an antibacterial factor, through dual ligand specificity, both as a siderophore-sequestrating molecule and a lysophosphatidic acid (LPA) sensor. This Gallus gallus (Chicken) protein is Extracellular fatty acid-binding protein (EXFABP).